Here is a 166-residue protein sequence, read N- to C-terminus: UPF0303 protein Avin_29320 (166 aa).

This sequence belongs to the UPF0303 family.

The protein is UPF0303 protein Avin_29320 of Azotobacter vinelandii (strain DJ / ATCC BAA-1303).